The primary structure comprises 696 residues: Polyribonucleotide nucleotidyltransferase (696 aa).

Mg(2+)-binding residues include aspartate 486 and aspartate 492. In terms of domain architecture, KH spans 553 to 612 (PRIIVRNIPKDRIGELIGPGGKNVRGISELTGAELYIEDDGRVTISGSNQESAEKAAKMV). Residues 622 to 690 (GKIYEGKVKR…KTGKIDLSRK (69 aa)) enclose the S1 motif domain.

This sequence belongs to the polyribonucleotide nucleotidyltransferase family. It depends on Mg(2+) as a cofactor.

The protein localises to the cytoplasm. The catalysed reaction is RNA(n+1) + phosphate = RNA(n) + a ribonucleoside 5'-diphosphate. Functionally, involved in mRNA degradation. Catalyzes the phosphorolysis of single-stranded polyribonucleotides processively in the 3'- to 5'-direction. In Leptospira borgpetersenii serovar Hardjo-bovis (strain JB197), this protein is Polyribonucleotide nucleotidyltransferase.